A 101-amino-acid chain; its full sequence is Putative pterin-4-alpha-carbinolamine dehydratase (101 aa).

Belongs to the pterin-4-alpha-carbinolamine dehydratase family.

The enzyme catalyses (4aS,6R)-4a-hydroxy-L-erythro-5,6,7,8-tetrahydrobiopterin = (6R)-L-erythro-6,7-dihydrobiopterin + H2O. This Ralstonia pickettii (strain 12J) protein is Putative pterin-4-alpha-carbinolamine dehydratase.